A 2003-amino-acid chain; its full sequence is Neurogenic locus notch homolog protein 4 (2003 aa).

The signal sequence occupies residues 1–23; that stretch reads MQPPSLLLLLLLLLLLCVSVVRP. EGF-like domains are found at residues 24-63, 64-115, 118-155, and 156-192; these read RGLLCGSFPEPCANGGTCLSLSLGQGTCQCAPGFLGETCQ, FPDP…ERCQ, LEDPCPPSFCSKRGRCHIQASGRPQCSCMPGWTGEQCQ, and LRDFCSANPCVNGGVCLATYPQIQCHCPPGFEGHACE. The Extracellular portion of the chain corresponds to 24–1447; that stretch reads RGLLCGSFPE…TAPPANQLPW (1424 aa). Cystine bridges form between cysteine 28-cysteine 41, cysteine 35-cysteine 51, cysteine 53-cysteine 62, cysteine 68-cysteine 80, cysteine 74-cysteine 103, cysteine 105-cysteine 114, cysteine 122-cysteine 133, cysteine 127-cysteine 143, cysteine 145-cysteine 154, cysteine 160-cysteine 171, cysteine 165-cysteine 180, cysteine 182-cysteine 191, cysteine 198-cysteine 211, cysteine 205-cysteine 220, cysteine 222-cysteine 231, cysteine 238-cysteine 249, cysteine 243-cysteine 262, cysteine 264-cysteine 273, cysteine 280-cysteine 291, cysteine 285-cysteine 300, cysteine 302-cysteine 311, cysteine 318-cysteine 332, cysteine 326-cysteine 341, cysteine 343-cysteine 352, cysteine 359-cysteine 370, cysteine 364-cysteine 379, cysteine 381-cysteine 390, cysteine 396-cysteine 407, cysteine 401-cysteine 418, cysteine 420-cysteine 429, cysteine 436-cysteine 452, cysteine 446-cysteine 461, cysteine 463-cysteine 472, cysteine 479-cysteine 490, cysteine 484-cysteine 499, cysteine 501-cysteine 510, cysteine 517-cysteine 528, cysteine 522-cysteine 537, cysteine 539-cysteine 548, cysteine 555-cysteine 566, cysteine 560-cysteine 575, cysteine 577-cysteine 586, cysteine 593-cysteine 604, cysteine 598-cysteine 613, cysteine 615-cysteine 624, cysteine 629-cysteine 640, cysteine 634-cysteine 649, and cysteine 651-cysteine 658. The 39-residue stretch at 194-232 folds into the EGF-like 5; calcium-binding domain; sequence DVNECFQDPGPCPKGTSCHNTLGSFQCLCPVGQEGPRCE. In terms of domain architecture, EGF-like 6 spans 234–274; that stretch reads RAGPCPPRGCSNGGTCQLMPEKDSTFHLCLCPPGFIGPDCE. Positions 276 to 312 constitute an EGF-like 7; calcium-binding domain; the sequence is NPDNCVSHQCQNGGTCQDGLDTYTCLCPETWTGWDCS. Positions 314–353 constitute an EGF-like 8; calcium-binding domain; the sequence is DVDECETQGPPHCRNGGTCQNSAGSFHCVCVSGWGGTSCE. Positions 355–391 constitute an EGF-like 9; calcium-binding domain; the sequence is NLDDCIAATCAPGSTCIDRVGSFSCLCPPGRTGLLCH. Residues 392 to 430 form the EGF-like 10 domain; that stretch reads LEDMCLSQPCHGDAQCSTNPLTGSTLCLCQPGYSGPTCH. Residues 432-473 enclose the EGF-like 11; calcium-binding domain; it reads DLDECLMAQQGPSPCEHGGSCLNTPGSFNCLCPPGYTGSRCE. The 37-residue stretch at 475-511 folds into the EGF-like 12; calcium-binding domain; it reads DHNECLSQPCHPGSTCLDLLATFHCLCPPGLEGQLCE. The EGF-like 13; calcium-binding domain occupies 513–549; sequence ETNECASAPCLNHADCHDLLNGFQCICLPGFSGTRCE. An EGF-like 14; calcium-binding domain is found at 551–587; the sequence is DIDECRSSPCANGGQCQDQPGAFHCKCLPGFEGPRCQ. Positions 589 to 625 constitute an EGF-like 15; calcium-binding domain; it reads EVDECLSDPCPVGASCLDLPGAFFCLCPSGFTGQLCE. 14 EGF-like domains span residues 626 to 659, 661 to 689, 691 to 727, 729 to 765, 767 to 803, 806 to 842, 844 to 880, 882 to 928, 930 to 966, 968 to 1004, 1006 to 1044, 1046 to 1085, 1087 to 1126, and 1130 to 1171; these read VPLCAPNLCQPKQICKDQKDKANCLCPDGSPGCA, PEDNCTCHHGHCQRSSCVCDVGWTGPECE, ELGGCISAPCAHGGTCYPQPSGYNCTCPTGYTGPTCS, EMTACHSGPCLNGGSCNPSPGGYYCTCPPSHTGPQCQ, STDYCVSAPCFNGGTCVNRPGTFSCLCAMGFQGPRCE, LRPSCADSPCRNRATCQDSPQGPRCLCPTGYTGGSCQ, LMDLCAQKPCPRNSHCLQTGPSFHCLCLQGWTGPLCN, PLSS…SLCQ, HVNPCESRPCQNGATCMAQPSGYLCQCAPGYDGQNCS, ELDACQSQPCHNHGTCTPKPGGFHCACPPGFVGLRCE, DVDECLDQPCHPTGTAACHSLANAFYCQCLPGHTGQWCE, EIDPCHSQPCFHGGTCEATAGSPLGFICHCPKGFEGPTCS, RAPSCGFHHCHHGGLCLPSPKPGFPPRCACLSGYGGPDCL, and APKG…PRCQ. A glycan (N-linked (GlcNAc...) asparagine) is linked at asparagine 664. 47 cysteine pairs are disulfide-bonded: cysteine 665–cysteine 672, cysteine 667–cysteine 677, cysteine 679–cysteine 688, cysteine 695–cysteine 706, cysteine 700–cysteine 715, cysteine 717–cysteine 726, cysteine 733–cysteine 744, cysteine 738–cysteine 753, cysteine 755–cysteine 764, cysteine 771–cysteine 782, cysteine 776–cysteine 791, cysteine 793–cysteine 802, cysteine 810–cysteine 821, cysteine 815–cysteine 830, cysteine 832–cysteine 841, cysteine 848–cysteine 859, cysteine 853–cysteine 868, cysteine 870–cysteine 879, cysteine 886–cysteine 907, cysteine 901–cysteine 916, cysteine 918–cysteine 927, cysteine 934–cysteine 945, cysteine 939–cysteine 954, cysteine 956–cysteine 965, cysteine 972–cysteine 983, cysteine 977–cysteine 992, cysteine 994–cysteine 1003, cysteine 1010–cysteine 1023, cysteine 1015–cysteine 1032, cysteine 1034–cysteine 1043, cysteine 1050–cysteine 1061, cysteine 1055–cysteine 1073, cysteine 1075–cysteine 1084, cysteine 1091–cysteine 1102, cysteine 1096–cysteine 1114, cysteine 1116–cysteine 1125, cysteine 1134–cysteine 1146, cysteine 1140–cysteine 1159, cysteine 1161–cysteine 1170, cysteine 1178–cysteine 1191, cysteine 1187–cysteine 1203, cysteine 1214–cysteine 1238, cysteine 1220–cysteine 1233, cysteine 1229–cysteine 1245, cysteine 1251–cysteine 1277, cysteine 1259–cysteine 1272, and cysteine 1268–cysteine 1284. A glycan (N-linked (GlcNAc...) asparagine) is linked at asparagine 714. The N-linked (GlcNAc...) asparagine glycan is linked to asparagine 964. An N-linked (GlcNAc...) asparagine glycan is attached at asparagine 1143. LNR repeat units follow at residues 1170 to 1213, 1214 to 1250, and 1251 to 1294; these read CQKP…PWKG, CPSHSRCWLLFRDGQCHPQCDSEECLFDGYDCETPPA, and CTPA…PEWG. The tract at residues 1347–1371 is disordered; the sequence is AEEKLGGTRDPTYQERAAPQTQPLG. The helical transmembrane segment at 1448–1468 threads the bilayer; the sequence is PVLCSPVAGVILLALGALLVL. At 1469-2003 the chain is on the cytoplasmic side; that stretch reads QLIRRRRREH…PINQGGEGKK (535 aa). Residues 1485 to 1508 are disordered; the sequence is PGFTRRPRTQSAPHRRRPPLGEDS. The segment covering 1489-1502 has biased composition (basic residues); the sequence is RRPRTQSAPHRRRP. ANK repeat units lie at residues 1633–1665, 1666–1698, 1700–1732, 1733–1765, and 1766–1798; these read TGETPLHLAARFSRPTAARRLLEAGANPNQPDR, AGRTPLHAAVAADAREVCQLLLRSRQTAVDART, DGTTPLMLAARLAVEDLVEELIAAQADVGARDK, WGKTALHWAAAVNNARAARSLLQAGADKDAQDN, and REQTPLFLAAREGAVEVAQLLLGLGAARELRDQ. Disordered regions lie at residues 1900 to 1927 and 1968 to 2003; these read LSGVGAGGGPTPRGRRFSAGMRGPRPNP and PPPCLTPSPERGSPQLDCGPPALQEMPINQGGEGKK.

This sequence belongs to the NOTCH family. In terms of assembly, heterodimer of a C-terminal fragment N(TM) and a N-terminal fragment N(EC) which are probably linked by disulfide bonds. Interacts with MAML1, MAML2 and MAML3 which act as transcriptional coactivators for NOTCH4. As to quaternary structure, (Microbial infection) Interacts with Epstein-Barr virus (EBV) RK-BARF0. Synthesized in the endoplasmic reticulum as an inactive form which is proteolytically cleaved by a furin-like convertase in the trans-Golgi network before it reaches the plasma membrane to yield an active, ligand-accessible form. Cleavage results in a C-terminal fragment N(TM) and a N-terminal fragment N(EC). Following ligand binding, it is cleaved by TNF-alpha converting enzyme (TACE) to yield a membrane-associated intermediate fragment called notch extracellular truncation (NEXT). This fragment is then cleaved by presenilin dependent gamma-secretase to release a notch-derived peptide containing the intracellular domain (NICD) from the membrane. Post-translationally, phosphorylated. As to expression, highly expressed in the heart, moderately in the lung and placenta and at low levels in the liver, skeletal muscle, kidney, pancreas, spleen, lymph node, thymus, bone marrow and fetal liver. No expression was seen in adult brain or peripheral blood leukocytes.

The protein localises to the cell membrane. Its subcellular location is the nucleus. In terms of biological role, functions as a receptor for membrane-bound ligands Jagged1, Jagged2 and Delta1 to regulate cell-fate determination. Upon ligand activation through the released notch intracellular domain (NICD) it forms a transcriptional activator complex with RBPJ/RBPSUH and activates genes of the enhancer of split locus. Affects the implementation of differentiation, proliferation and apoptotic programs. May regulate branching morphogenesis in the developing vascular system. This is Neurogenic locus notch homolog protein 4 from Homo sapiens (Human).